The sequence spans 445 residues: MSLWLEAAVPDVSPDSATELWKTEPQDAGDQGGNTCILREEARMPQSTGGALRIGLESSEPTALLPRAETLPEPTELRPQKRKKGPAPKMLGNELCSVCGDKASAFHYNVLSCEGCKGFFRRSVIKGARYICHSGGHCPMDTYMRRKCQECRLRKCRHAGMREECVLSEEQIRLKKLKRQEEEQAQATSVSPRVSSPPQVLPQLSPEQLGMIEKLVAAQQQCNRRSFSDRLRVTPWPIAPDPQSREARQQRFAHFTELAIVSVQEIVDFAKQLPGFLQLSREDQIALLKTSAIEVMLLETSRRYNPGSESITFLKDFSYNREDFAKAGLQVEFINPIFEFSRSMNELQLNDAEFALLIAISIFSADRPNVQDQLQVERLQHTYVEALHAYVSINHPHDRLMFPRMLMKLVSLRTLSSVHSEQVFALRLQDKKLPPLLSEIWDVHE.

Disordered stretches follow at residues 1–34 (MSLW…QGGN) and 62–86 (TALL…KKGP). Residues 1-94 (MSLWLEAAVP…GPAPKMLGNE (94 aa)) form a transactivation AF-1; required for ligand-independent transactivation function region. Residues 93 to 168 (NELCSVCGDK…AGMREECVLS (76 aa)) constitute a DNA-binding region (nuclear receptor). 2 NR C4-type zinc fingers span residues 96–116 (CSVC…CEGC) and 132–156 (CHSG…LRKC). The interval 178–200 (KRQEEEQAQATSVSPRVSSPPQV) is disordered. The segment covering 189–200 (SVSPRVSSPPQV) has biased composition (low complexity). Phosphoserine is present on serine 191. Residues 203–445 (QLSPEQLGMI…LLSEIWDVHE (243 aa)) form a transactivation AF-2; required for ligand-dependent transactivation function; mediates interaction with CCAR2 region. The region spanning 207 to 445 (EQLGMIEKLV…LLSEIWDVHE (239 aa)) is the NR LBD domain.

The protein belongs to the nuclear hormone receptor family. NR1 subfamily. As to quaternary structure, heterodimer of NR1H3 and RXR (retinoic acid receptor). Interacts with CCAR2 (via N-terminus) in a ligand-independent manner. Interacts with SIRT1 and this interaction is inhibited by CCAR2. In terms of processing, ubiquitinated by UBR5, leading to its degradation: UBR5 specifically recognizes and binds ligand-bound NR1H3 when it is not associated with coactivators (NCOAs). In presence of NCOAs, the UBR5-degron is not accessible, preventing its ubiquitination and degradation. In terms of tissue distribution, in adults it is expressed in spleen, pituitary, lung, liver, and fat. Weaker expression is observed in several other tissues.

It localises to the nucleus. The protein resides in the cytoplasm. Functionally, nuclear receptor that exhibits a ligand-dependent transcriptional activation activity. Interaction with retinoic acid receptor (RXR) shifts RXR from its role as a silent DNA-binding partner to an active ligand-binding subunit in mediating retinoid responses through target genes defined by LXRES. LXRES are DR4-type response elements characterized by direct repeats of two similar hexanuclotide half-sites spaced by four nucleotides. Plays an important role in the regulation of cholesterol homeostasis, regulating cholesterol uptake through MYLIP-dependent ubiquitination of LDLR, VLDLR and LRP8. Interplays functionally with RORA for the regulation of genes involved in liver metabolism. Induces LPCAT3-dependent phospholipid remodeling in endoplasmic reticulum (ER) membranes of hepatocytes, driving SREBF1 processing and lipogenesis. Via LPCAT3, triggers the incorporation of arachidonate into phosphatidylcholines of ER membranes, increasing membrane dynamics and enabling triacylglycerols transfer to nascent very low-density lipoprotein (VLDL) particles. Via LPCAT3 also counteracts lipid-induced ER stress response and inflammation, likely by modulating SRC kinase membrane compartmentalization and limiting the synthesis of lipid inflammatory mediators. The polypeptide is Oxysterols receptor LXR-alpha (Nr1h3) (Rattus norvegicus (Rat)).